The following is a 253-amino-acid chain: Phosphoribosylaminoimidazole-succinocarboxamide synthase (253 aa).

This sequence belongs to the SAICAR synthetase family.

It catalyses the reaction 5-amino-1-(5-phospho-D-ribosyl)imidazole-4-carboxylate + L-aspartate + ATP = (2S)-2-[5-amino-1-(5-phospho-beta-D-ribosyl)imidazole-4-carboxamido]succinate + ADP + phosphate + 2 H(+). The protein operates within purine metabolism; IMP biosynthesis via de novo pathway; 5-amino-1-(5-phospho-D-ribosyl)imidazole-4-carboxamide from 5-amino-1-(5-phospho-D-ribosyl)imidazole-4-carboxylate: step 1/2. The chain is Phosphoribosylaminoimidazole-succinocarboxamide synthase from Jannaschia sp. (strain CCS1).